Consider the following 409-residue polypeptide: MVSDSKLELPLPVNQQKPRRRRILKVHLLIAALILSAVGYLGKGKWIWTPERKAHFVLTHFPLIDGHNDLPIYLRENYDNRLLNISLEHLPGQTDIFRLRQGHVGGQFWSVFVECPSLDSNSSLSWNRTGEYEAVTQTLQQIDVVKRMALYYPKTFSLTDHSGKVKFDFLRNHISSMMGIEGLHQIAGSPSILRQFYDLGVRYATLAHNCDNVFADAAVDGKRTNKGLSPAGRDIVREMNRLGMIVDLSHTTPETMHQALDVSVAPAFFSHSSAKGVYDHPRNVPDDVLIRVKETDGVVMVNFYPAFISPHPENATIDTVVEHIMHIANVTGSYRHIGLGGDFDGIDMVPKGLEDVSKYPDLFVKLAERGLSITELADIAGRNVLRVWKTTEDLGHSIHEPPLEWEDDF.

An N-terminal signal peptide occupies residues 1 to 39; that stretch reads MVSDSKLELPLPVNQQKPRRRRILKVHLLIAALILSAVG. Positions 67, 69, 181, 250, and 271 each coordinate Zn(2+).

It belongs to the metallo-dependent hydrolases superfamily. Peptidase M19 family. In terms of assembly, interacts with dil1. The cofactor is Zn(2+).

It carries out the reaction an L-aminoacyl-L-amino acid + H2O = 2 an L-alpha-amino acid. This is an uncharacterized protein from Schizosaccharomyces pombe (strain 972 / ATCC 24843) (Fission yeast).